A 1262-amino-acid chain; its full sequence is DNA-directed RNA polymerase subunit beta' (1262 aa).

Zn(2+) is bound by residues C220, C294, C301, and C304.

The protein belongs to the RNA polymerase beta' chain family. RpoC2 subfamily. As to quaternary structure, in cyanobacteria the RNAP catalytic core is composed of 2 alpha, 1 beta, 1 beta', 1 gamma and 1 omega subunit. When a sigma factor is associated with the core the holoenzyme is formed, which can initiate transcription. It depends on Zn(2+) as a cofactor.

It carries out the reaction RNA(n) + a ribonucleoside 5'-triphosphate = RNA(n+1) + diphosphate. In terms of biological role, DNA-dependent RNA polymerase catalyzes the transcription of DNA into RNA using the four ribonucleoside triphosphates as substrates. The protein is DNA-directed RNA polymerase subunit beta' of Gloeobacter violaceus (strain ATCC 29082 / PCC 7421).